We begin with the raw amino-acid sequence, 221 residues long: Ras-related protein Rab-28 (221 aa).

Residue S2 is modified to N-acetylserine. S8 is modified (phosphoserine). Residues G21, G24, K25, T26, S27, G38, K39, Y41, and T44 each coordinate GTP. T26 is a binding site for Mg(2+). The switch I stretch occupies residues 35–49; it reads ETFGKQYKQTIGLDF. Mg(2+) is bound by residues T44 and D68. Residues 68–85 form a switch II region; that stretch reads DIGGQTIGGKMLDKYIYG. The GTP site is built by G71, N129, K130, D132, A160, and K161. The residue at position 218 (C218) is a Cysteine methyl ester. C218 carries the S-farnesyl cysteine lipid modification. Positions 219 to 221 are cleaved as a propeptide — removed in mature form; the sequence is AVQ.

This sequence belongs to the small GTPase superfamily. Rab family. As to quaternary structure, interacts (prenylated form) with PDE6D; the interaction promotes RAB28 delivery to the photoreceptor outer segments. Interacts with KCNJ13; the interaction may facilitate cone outer segments phagocytosis. Interacts with RELA; the interaction contributes to RELA transport from cytoplasm to nucleus. The cofactor is Mg(2+). Post-translationally, isoprenylated. As to expression, testis, brain, and to much lower levels heart, skeletal muscle and fat cells. Expressed in the retina.

Its subcellular location is the cell membrane. It is found in the cytoplasm. The protein resides in the cytoskeleton. The protein localises to the cilium basal body. It localises to the nucleus. The catalysed reaction is GTP + H2O = GDP + phosphate + H(+). Regulated by guanine nucleotide exchange factors (GEFs) which promote the exchange of bound GDP for free GTP. Regulated by GTPase activating proteins (GAPs) which increase the GTP hydrolysis activity. Inhibited by GDP dissociation inhibitors (GDIs). Functionally, the small GTPases Rab are key regulators of intracellular membrane trafficking, from the formation of transport vesicles to their fusion with membranes. Rabs cycle between an inactive GDP-bound form and an active GTP-bound form that is able to recruit to membranes different sets of downstream effectors directly responsible for vesicle formation, movement, tethering and fusion. RAB28 is required for shedding and phagocytosis of cone cell outer segments (OS) discs in the retina. Also participates in nuclear factor kappa-B p65/RELA nuclear transport in endothelial cells. This chain is Ras-related protein Rab-28, found in Rattus norvegicus (Rat).